A 224-amino-acid polypeptide reads, in one-letter code: Phosphoribosylformylglycinamidine synthase subunit PurQ (224 aa).

Residues 2–224 (KFAVIQFPGS…SILNHAEVKA (223 aa)) form the Glutamine amidotransferase type-1 domain. Cysteine 86 (nucleophile) is an active-site residue. Active-site residues include histidine 195 and glutamate 197.

Part of the FGAM synthase complex composed of 1 PurL, 1 PurQ and 2 PurS subunits.

It is found in the cytoplasm. The catalysed reaction is N(2)-formyl-N(1)-(5-phospho-beta-D-ribosyl)glycinamide + L-glutamine + ATP + H2O = 2-formamido-N(1)-(5-O-phospho-beta-D-ribosyl)acetamidine + L-glutamate + ADP + phosphate + H(+). It catalyses the reaction L-glutamine + H2O = L-glutamate + NH4(+). It functions in the pathway purine metabolism; IMP biosynthesis via de novo pathway; 5-amino-1-(5-phospho-D-ribosyl)imidazole from N(2)-formyl-N(1)-(5-phospho-D-ribosyl)glycinamide: step 1/2. Its function is as follows. Part of the phosphoribosylformylglycinamidine synthase complex involved in the purines biosynthetic pathway. Catalyzes the ATP-dependent conversion of formylglycinamide ribonucleotide (FGAR) and glutamine to yield formylglycinamidine ribonucleotide (FGAM) and glutamate. The FGAM synthase complex is composed of three subunits. PurQ produces an ammonia molecule by converting glutamine to glutamate. PurL transfers the ammonia molecule to FGAR to form FGAM in an ATP-dependent manner. PurS interacts with PurQ and PurL and is thought to assist in the transfer of the ammonia molecule from PurQ to PurL. The chain is Phosphoribosylformylglycinamidine synthase subunit PurQ from Lactobacillus delbrueckii subsp. bulgaricus (strain ATCC 11842 / DSM 20081 / BCRC 10696 / JCM 1002 / NBRC 13953 / NCIMB 11778 / NCTC 12712 / WDCM 00102 / Lb 14).